The primary structure comprises 235 residues: MNSTRLVYELCDIVNLYLCQPGVQIDVDRCASGPHVFTKGGTEAICTVKLSHGLVYNIEFVYKFWAHKLESVKYPFSPCFIISNNGLATTLKCFLSRPRNVNHFGHVLNIDSDVYLTKNTSVILSQDDFVKFKTNLVFSKDLDVFHSMVVFRTYLIEHRQALQFLVVKPRSSKRVNSILSSVAKTASQNFILDPPRRSEETRVCIKPWTLSKKNIWTIILSLVAVVAIILKWREL.

Residues 1 to 214 (MNSTRLVYEL…IKPWTLSKKN (214 aa)) lie on the Perinuclear space side of the membrane. A helical transmembrane segment spans residues 215 to 232 (IWTIILSLVAVVAIILKW). At 233–235 (REL) the chain is on the nuclear side.

This sequence belongs to the herpesviridae NEC2 protein family. In terms of assembly, forms a heterohexameric complex with NEC1. Phosphorylated.

It is found in the host nucleus inner membrane. Its function is as follows. Plays an essential role in virion nuclear egress, the first step of virion release from infected cell. Within the host nucleus, NEC1 interacts with the newly formed capsid through the vertexes and directs it to the inner nuclear membrane by associating with NEC2. Induces the budding of the capsid at the inner nuclear membrane as well as its envelopment into the perinuclear space. There, the NEC1/NEC2 complex promotes the fusion of the enveloped capsid with the outer nuclear membrane and the subsequent release of the viral capsid into the cytoplasm where it will reach the secondary budding sites in the host Golgi or trans-Golgi network. The sequence is that of Nuclear egress protein 2 from Saimiri sciureus (Common squirrel monkey).